The following is a 72-amino-acid chain: Toxin Cll8 (72 aa).

The signal sequence occupies residues 1–4 (TVSA). An LCN-type CS-alpha/beta domain is found at 5–70 (KEGYLVKKSN…TWPLPNKSCG (66 aa)). 4 cysteine pairs are disulfide-bonded: Cys-16–Cys-69, Cys-20–Cys-45, Cys-29–Cys-50, and Cys-33–Cys-52. At Cys-69 the chain carries Cysteine amide.

This sequence belongs to the long (4 C-C) scorpion toxin superfamily. Sodium channel inhibitor family. Beta subfamily. In terms of tissue distribution, expressed by the venom gland.

Its subcellular location is the secreted. Functionally, beta toxins bind voltage-independently at site-4 of sodium channels (Nav) and shift the voltage of activation toward more negative potentials thereby affecting sodium channel activation and promoting spontaneous and repetitive firing. This chain is Toxin Cll8, found in Centruroides limpidus (Mexican scorpion).